A 198-amino-acid chain; its full sequence is MYYAEPIARLIEELTKLPGIGPKTAQRLAFHILHMEPSVVEGIARTLVEARAKVKYCSVCCNLTDQDPCQICADDGRDHSTICVVQEPRDVVAMEKTREYHGVYHVLHGALNPMEGIGIDDIRVKELVARLGDGRVQEVILCTNPNTEGETTAMYIARYIKPLGVKVTRIARGLPMGGDLEYADEVTLAKALEGRREI.

The C4-type zinc finger occupies 57–72; the sequence is CSVCCNLTDQDPCQIC. The 96-residue stretch at 80–175 folds into the Toprim domain; sequence STICVVQEPR…KVTRIARGLP (96 aa).

The protein belongs to the RecR family.

Its function is as follows. May play a role in DNA repair. It seems to be involved in an RecBC-independent recombinational process of DNA repair. It may act with RecF and RecO. This Symbiobacterium thermophilum (strain DSM 24528 / JCM 14929 / IAM 14863 / T) protein is Recombination protein RecR.